The primary structure comprises 833 residues: Leucine--tRNA ligase (833 aa).

Residues 41–52 (PYPSGAGLHVGH) carry the 'HIGH' region motif. The 'KMSKS' region signature appears at 610–614 (KMSKS). Position 613 (Lys613) interacts with ATP.

Belongs to the class-I aminoacyl-tRNA synthetase family.

The protein localises to the cytoplasm. The catalysed reaction is tRNA(Leu) + L-leucine + ATP = L-leucyl-tRNA(Leu) + AMP + diphosphate. This chain is Leucine--tRNA ligase, found in Streptococcus pyogenes serotype M1.